Reading from the N-terminus, the 250-residue chain is Probable transcriptional regulatory protein Cag_0165 (250 aa).

The protein belongs to the TACO1 family.

The protein resides in the cytoplasm. In Chlorobium chlorochromatii (strain CaD3), this protein is Probable transcriptional regulatory protein Cag_0165.